Reading from the N-terminus, the 476-residue chain is MKLDLTVLEQARLLVVGDVMLDRYWHGGTSRISPEAPVPVVKVGESEDRPGGAANVALNIAALGAHAALAGVVGEDENADLLAARLEACDVSTYFYRSPEIPTITKLRVMSRNQQLLRLDFEESLWEIDTQGLTERVEAALPEADVVILSDYGKGSLNRVETLIATARGAGKRVLVDPKGHDFAKYRGASIITPNLGEFEAVVGPCPDDATLAEKGERLRAELELEALLVTRSEKGMTLIREGHAPLHLPTHAREVYDVTGAGDTVIGVLGLALAAGHGYPEAIMLANLAAGLVVAKPGTATLSIAELYTALHGDKLAEFGPIEESALIDAVRAAKLRGERVVMTNGCFDILHAGHVAYLEQAKRLGDRLVVAVNDDASVGRLKGPKRPINALERRMQVLAGLSAVDWVVPFGEETPARLIAEVLPDVLVKGGDYRPEDIAGGEAVMAAGGEVRVLNFEDGVSTTAMIDTILDREG.

The tract at residues 1–318 (MKLDLTVLEQ…YTALHGDKLA (318 aa)) is ribokinase. ATP is bound at residue 195–198 (NLGE). The active site involves Asp264. Residues 344 to 476 (MTNGCFDILH…MIDTILDREG (133 aa)) form a cytidylyltransferase region.

The protein in the N-terminal section; belongs to the carbohydrate kinase PfkB family. In the C-terminal section; belongs to the cytidylyltransferase family. Homodimer.

The catalysed reaction is D-glycero-beta-D-manno-heptose 7-phosphate + ATP = D-glycero-beta-D-manno-heptose 1,7-bisphosphate + ADP + H(+). The enzyme catalyses D-glycero-beta-D-manno-heptose 1-phosphate + ATP + H(+) = ADP-D-glycero-beta-D-manno-heptose + diphosphate. It functions in the pathway nucleotide-sugar biosynthesis; ADP-L-glycero-beta-D-manno-heptose biosynthesis; ADP-L-glycero-beta-D-manno-heptose from D-glycero-beta-D-manno-heptose 7-phosphate: step 1/4. The protein operates within nucleotide-sugar biosynthesis; ADP-L-glycero-beta-D-manno-heptose biosynthesis; ADP-L-glycero-beta-D-manno-heptose from D-glycero-beta-D-manno-heptose 7-phosphate: step 3/4. Catalyzes the phosphorylation of D-glycero-D-manno-heptose 7-phosphate at the C-1 position to selectively form D-glycero-beta-D-manno-heptose-1,7-bisphosphate. Functionally, catalyzes the ADP transfer from ATP to D-glycero-beta-D-manno-heptose 1-phosphate, yielding ADP-D-glycero-beta-D-manno-heptose. In Chromohalobacter salexigens (strain ATCC BAA-138 / DSM 3043 / CIP 106854 / NCIMB 13768 / 1H11), this protein is Bifunctional protein HldE.